We begin with the raw amino-acid sequence, 362 residues long: MLKVGSSLLAADGGGLSPRFALGLAQFVSANLAAGRELVIVSSGAVAAGRAILPKAVDVGAPIAARQALAALGQAQLIALWQRFFERAVAQVLLTHDDLRNRRRYLNARATLGELLRLGALPVINENDTVSVDELKLGDNDNLAAIVAALVDADALFIATDIDGLYSADPRSNPLARPLDDVPELTPEVLAMAGGSGSNVGTGGMRTKLEAAAKAGAAGIETYLFNGRSGEVVRALAQDRLRGTRIHAARTRIAARKYWLRHAPVEAGAILVDAGAAMALSDKGASLLPGGVVGAEGDFRRGDMVEIRLRDDEGERCLARGVSQYSAVDIRRIARRHSRDIENVLGYSYGENVVHRDDLVLL.

Lys-3 lines the ATP pocket. 3 residues coordinate substrate: Ser-43, Asp-128, and Asn-140. Residues 160–161 and 202–208 contribute to the ATP site; these read TD and TGGMRTK. The PUA domain occupies 267-348; that stretch reads AGAILVDAGA…RDIENVLGYS (82 aa).

The protein belongs to the glutamate 5-kinase family.

The protein localises to the cytoplasm. It catalyses the reaction L-glutamate + ATP = L-glutamyl 5-phosphate + ADP. It participates in amino-acid biosynthesis; L-proline biosynthesis; L-glutamate 5-semialdehyde from L-glutamate: step 1/2. In terms of biological role, catalyzes the transfer of a phosphate group to glutamate to form L-glutamate 5-phosphate. The chain is Glutamate 5-kinase from Xanthomonas oryzae pv. oryzae (strain MAFF 311018).